A 152-amino-acid polypeptide reads, in one-letter code: Superoxide dismutase [Cu-Zn] (152 aa).

The Cu cation site is built by His-45, His-47, and His-62. An intrachain disulfide couples Cys-56 to Cys-145. Residues His-62, His-70, His-79, and Asp-82 each coordinate Zn(2+). Residue His-119 participates in Cu cation binding.

Belongs to the Cu-Zn superoxide dismutase family. Homodimer. Requires Cu cation as cofactor. Zn(2+) is required as a cofactor.

Its subcellular location is the cytoplasm. The catalysed reaction is 2 superoxide + 2 H(+) = H2O2 + O2. Destroys radicals which are normally produced within the cells and which are toxic to biological systems. This chain is Superoxide dismutase [Cu-Zn] (SODCC), found in Spinacia oleracea (Spinach).